We begin with the raw amino-acid sequence, 678 residues long: Translation factor GUF1 homolog, chloroplastic (678 aa).

The N-terminal 43 residues, 1–43, are a transit peptide targeting the chloroplast; the sequence is MASILLSLNTHTLLPLHTRTRTTKTTLKILRFSHKLPPSSPFY. The tr-type G domain occupies 81–262; sequence KNIRNFCIIA…AIVERVPPPR (182 aa). GTP contacts are provided by residues 90–97, 155–159, and 209–212; these read AHIDHGKS, DTPGH, and NKID.

The protein belongs to the TRAFAC class translation factor GTPase superfamily. Classic translation factor GTPase family. LepA subfamily.

The protein resides in the plastid. The protein localises to the chloroplast. It catalyses the reaction GTP + H2O = GDP + phosphate + H(+). In terms of biological role, promotes chloroplast protein synthesis. May act as a fidelity factor of the translation reaction, by catalyzing a one-codon backward translocation of tRNAs on improperly translocated ribosomes. The sequence is that of Translation factor GUF1 homolog, chloroplastic from Populus trichocarpa (Western balsam poplar).